Consider the following 716-residue polypeptide: Protein Hook homolog 2 (716 aa).

Residues 1 to 161 are required for localization to the centrosome and induction of aggresome formation; that stretch reads MSVDKAELCG…ELMTKDTPDS (161 aa). A sufficient for interaction with microtubules region spans residues 1–546; sequence MSVDKAELCG…LKRKLEDHLQ (546 aa). One can recognise a Calponin-homology (CH) domain in the interval 6–122; sequence AELCGSLLTW…KLLQLVLGCA (117 aa). Residue serine 163 is modified to Phosphoserine. 2 coiled-coil regions span residues 188–427 and 455–605; these read DHLQ…AQLQ and AELR…VDKA. The tract at residues 533–716 is required for localization to the centrosome and induction of aggresome formation; it reads DPTLLKRKLE…ALSLRPTDKH (184 aa). Positions 582–716 are sufficient for interaction with CNTRL; sequence DSLQKKDADL…ALSLRPTDKH (135 aa).

This sequence belongs to the hook family. As to quaternary structure, self-associates. Component of the FTS/Hook/FHIP complex (FHF complex), composed of AKTIP/FTS, FHIP1B, and one or more members of the Hook family of proteins HOOK1, HOOK2, and HOOK3. May interact directly with AKTIP/FTS, HOOK1 and HOOK3. Associates with several subunits of the homotypic vesicular sorting complex (the HOPS complex) including VPS16 and VPS41; these interactions may be indirect. Interacts with CNTRL. Interacts with microtubules. Interacts with ZC3H14. Interacts with LRGUK (via guanylate kinase-like domain). Interacts with CCDC181. Interacts with AP4M1; the interaction is direct, mediates the interaction between FTS-Hook-FHIP (FHF) complex and AP-4 and the perinuclear distribution of AP-4. As to expression, expressed in brain, cerebellum, kidney, liver and heart, with highest levels in heart and kidney (at protein level).

It is found in the cytoplasm. It localises to the cytoskeleton. The protein resides in the microtubule organizing center. Its subcellular location is the centrosome. The protein localises to the golgi apparatus. It is found in the trans-Golgi network. Its function is as follows. Component of the FTS/Hook/FHIP complex (FHF complex). The FHF complex may function to promote vesicle trafficking and/or fusion via the homotypic vesicular protein sorting complex (the HOPS complex). Contributes to the establishment and maintenance of centrosome function. May function in the positioning or formation of aggresomes, which are pericentriolar accumulations of misfolded proteins, proteasomes and chaperones. FHF complex promotes the distribution of AP-4 complex to the perinuclear area of the cell. In Mus musculus (Mouse), this protein is Protein Hook homolog 2 (Hook2).